The sequence spans 366 residues: Protein sigma-NS (366 aa).

The interval 1 to 11 (MASSLRAAISK) is important for ssRNA-binding and formation of complexes.

Belongs to the orthoreovirus sigma-NS protein family. As to quaternary structure, homooligomer; in presence of RNA. Interacts with protein mu-NS; this interaction allows the localization of sigma-NS to the viral factories. Interacts with host G3BP1 (via C-terminus); this interaction induces the relocalization of G3BP1 and other SG proteins to the viral factories periphery.

The protein resides in the host cytoplasm. Functionally, protein that binds to ssRNA and participates with protein mu-NS in forming the matrix of viral factories, which are large inclusions in the host cytoplasm where replication intermediates are assembled and viral RNA replication takes place. Plays a role in the inhibition of the integrated stress response (ISR) to escape from host cell translational shutoff. Participates in the disruption of stress granules (SG) through its association with host G3BP1 and mu-NS. The sequence is that of Protein sigma-NS (S3) from Mammalia (T3D).